The following is a 546-amino-acid chain: Chaperonin GroEL (546 aa).

ATP contacts are provided by residues 29-32, K50, 86-90, G414, and D492; these read TMGP and DGTTT.

Belongs to the chaperonin (HSP60) family. In terms of assembly, forms a cylinder of 14 subunits composed of two heptameric rings stacked back-to-back. Interacts with the co-chaperonin GroES.

It localises to the cytoplasm. The catalysed reaction is ATP + H2O + a folded polypeptide = ADP + phosphate + an unfolded polypeptide.. Its function is as follows. Together with its co-chaperonin GroES, plays an essential role in assisting protein folding. The GroEL-GroES system forms a nano-cage that allows encapsulation of the non-native substrate proteins and provides a physical environment optimized to promote and accelerate protein folding. This chain is Chaperonin GroEL, found in Helicobacter pylori (strain J99 / ATCC 700824) (Campylobacter pylori J99).